The sequence spans 132 residues: Large ribosomal subunit protein uL14 (132 aa).

It belongs to the universal ribosomal protein uL14 family. In terms of assembly, part of the 50S ribosomal subunit. Forms a cluster with proteins L3 and L24e, part of which may contact the 16S rRNA in 2 intersubunit bridges.

Binds to 23S rRNA. Forms part of two intersubunit bridges in the 70S ribosome. The protein is Large ribosomal subunit protein uL14 of Methanocorpusculum labreanum (strain ATCC 43576 / DSM 4855 / Z).